The sequence spans 509 residues: Maturase K (509 aa).

Belongs to the intron maturase 2 family. MatK subfamily.

The protein localises to the plastid. It is found in the chloroplast. Functionally, usually encoded in the trnK tRNA gene intron. Probably assists in splicing its own and other chloroplast group II introns. This chain is Maturase K, found in Chamaecyparis obtusa (Hinoki false-cypress).